A 77-amino-acid chain; its full sequence is U8-hexatoxin-Mg1a (77 aa).

A signal peptide spans 1 to 22 (MKVFSFTIGLVVIISLFAFALA). Residues 23-43 (YDEETDLMKKLVEMERAIEQR) constitute a propeptide that is removed on maturation. Disulfide bonds link Cys46–Cys60, Cys53–Cys65, and Cys59–Cys76.

Expressed by the venom gland.

It localises to the secreted. Its function is as follows. Intrathorax injection into crickets causes paralysis prolonged for more than 60 minutes, followed by recovery. This is U8-hexatoxin-Mg1a from Macrothele gigas (Japanese funnel web spider).